We begin with the raw amino-acid sequence, 1010 residues long: Phosphoenolpyruvate carboxylase (1010 aa).

Residues 1 to 18 (MIMRSPETSGASMPQSTA) show a composition bias toward polar residues. 2 disordered regions span residues 1-36 (MIMR…PGAG) and 132-154 (LRPS…PPLA). Active-site residues include His195 and Lys652. The tract at residues 967–986 (QNRQPPMSESPGTPEDRRTY) is disordered.

This sequence belongs to the PEPCase type 1 family. Requires Mg(2+) as cofactor.

The catalysed reaction is oxaloacetate + phosphate = phosphoenolpyruvate + hydrogencarbonate. Its function is as follows. Forms oxaloacetate, a four-carbon dicarboxylic acid source for the tricarboxylic acid cycle. This is Phosphoenolpyruvate carboxylase from Parasynechococcus marenigrum (strain WH8102).